We begin with the raw amino-acid sequence, 477 residues long: Glycogen synthase (477 aa).

Lys-15 is a binding site for ADP-alpha-D-glucose.

Belongs to the glycosyltransferase 1 family. Bacterial/plant glycogen synthase subfamily.

The enzyme catalyses [(1-&gt;4)-alpha-D-glucosyl](n) + ADP-alpha-D-glucose = [(1-&gt;4)-alpha-D-glucosyl](n+1) + ADP + H(+). It participates in glycan biosynthesis; glycogen biosynthesis. In terms of biological role, synthesizes alpha-1,4-glucan chains using ADP-glucose. This chain is Glycogen synthase, found in Clostridium acetobutylicum (strain ATCC 824 / DSM 792 / JCM 1419 / IAM 19013 / LMG 5710 / NBRC 13948 / NRRL B-527 / VKM B-1787 / 2291 / W).